The chain runs to 564 residues: Arginine--tRNA ligase (564 aa).

A 'HIGH' region motif is present at residues 136–146; it reads ANPTGPLHMGN.

This sequence belongs to the class-I aminoacyl-tRNA synthetase family. Monomer.

The protein localises to the cytoplasm. It carries out the reaction tRNA(Arg) + L-arginine + ATP = L-arginyl-tRNA(Arg) + AMP + diphosphate. This Acetivibrio thermocellus (strain ATCC 27405 / DSM 1237 / JCM 9322 / NBRC 103400 / NCIMB 10682 / NRRL B-4536 / VPI 7372) (Clostridium thermocellum) protein is Arginine--tRNA ligase.